A 309-amino-acid polypeptide reads, in one-letter code: Porphobilinogen deaminase (309 aa).

Cysteine 241 is modified (S-(dipyrrolylmethanemethyl)cysteine).

Belongs to the HMBS family. As to quaternary structure, monomer. The cofactor is dipyrromethane.

The enzyme catalyses 4 porphobilinogen + H2O = hydroxymethylbilane + 4 NH4(+). The protein operates within porphyrin-containing compound metabolism; protoporphyrin-IX biosynthesis; coproporphyrinogen-III from 5-aminolevulinate: step 2/4. Tetrapolymerization of the monopyrrole PBG into the hydroxymethylbilane pre-uroporphyrinogen in several discrete steps. In Bacillus mycoides (strain KBAB4) (Bacillus weihenstephanensis), this protein is Porphobilinogen deaminase.